Here is a 739-residue protein sequence, read N- to C-terminus: Phosphoribosylformylglycinamidine synthase subunit PurL (739 aa).

Residue H53 is part of the active site. The ATP site is built by Y56 and K95. Mg(2+) is bound at residue E97. Residues S98–H101 and R120 contribute to the substrate site. Residue H99 is the Proton acceptor of the active site. Residue D121 participates in Mg(2+) binding. Q244 is a binding site for substrate. Position 274 (D274) interacts with Mg(2+). Substrate is bound at residue E318–Q320. ATP is bound by residues D501 and G538. N539 provides a ligand contact to Mg(2+). Residue S541 participates in substrate binding.

This sequence belongs to the FGAMS family. As to quaternary structure, monomer. Part of the FGAM synthase complex composed of 1 PurL, 1 PurQ and 2 PurS subunits.

The protein localises to the cytoplasm. The enzyme catalyses N(2)-formyl-N(1)-(5-phospho-beta-D-ribosyl)glycinamide + L-glutamine + ATP + H2O = 2-formamido-N(1)-(5-O-phospho-beta-D-ribosyl)acetamidine + L-glutamate + ADP + phosphate + H(+). The protein operates within purine metabolism; IMP biosynthesis via de novo pathway; 5-amino-1-(5-phospho-D-ribosyl)imidazole from N(2)-formyl-N(1)-(5-phospho-D-ribosyl)glycinamide: step 1/2. Its function is as follows. Part of the phosphoribosylformylglycinamidine synthase complex involved in the purines biosynthetic pathway. Catalyzes the ATP-dependent conversion of formylglycinamide ribonucleotide (FGAR) and glutamine to yield formylglycinamidine ribonucleotide (FGAM) and glutamate. The FGAM synthase complex is composed of three subunits. PurQ produces an ammonia molecule by converting glutamine to glutamate. PurL transfers the ammonia molecule to FGAR to form FGAM in an ATP-dependent manner. PurS interacts with PurQ and PurL and is thought to assist in the transfer of the ammonia molecule from PurQ to PurL. This chain is Phosphoribosylformylglycinamidine synthase subunit PurL, found in Listeria monocytogenes serotype 4b (strain CLIP80459).